The primary structure comprises 332 residues: Terpene synthase 1 (332 aa).

Positions 81–86 (DDGLDA) match the DDxx(x)D/E motif motif. Positions 221 to 229 (NDLVSYEKE) match the NDxxSxxxD/E motif motif.

The protein belongs to the terpene synthase family.

The enzyme catalyses (2E,6E)-farnesyl diphosphate = (2S,3R,6S,9S)-(-)-protoillud-7-ene + diphosphate. In terms of biological role, terpene synthase that converts its substrate farnesyl diphosphate (FPP) into the sesquiterpene protoillud-7-ene. The chain is Terpene synthase 1 from Acytostelium subglobosum (Slime mold).